The primary structure comprises 97 residues: NADH-ubiquinone oxidoreductase chain 4L (97 aa).

A run of 3 helical transmembrane segments spans residues 1–21, 23–43, and 60–80; these read MALL…ILLN, LHFL…FIGI, and LLLL…MVAL.

Belongs to the complex I subunit 4L family.

The protein localises to the mitochondrion membrane. The enzyme catalyses a ubiquinone + NADH + 5 H(+)(in) = a ubiquinol + NAD(+) + 4 H(+)(out). Functionally, core subunit of the mitochondrial membrane respiratory chain NADH dehydrogenase (Complex I) that is believed to belong to the minimal assembly required for catalysis. Complex I functions in the transfer of electrons from NADH to the respiratory chain. The immediate electron acceptor for the enzyme is believed to be ubiquinone. This Paracentrotus lividus (Common sea urchin) protein is NADH-ubiquinone oxidoreductase chain 4L (ND4L).